A 340-amino-acid polypeptide reads, in one-letter code: Sesquiterpene synthase 6 (340 aa).

The Mg(2+) site is built by D90, N229, S233, and E237. Positions 90–94 (DDITD) match the DDXXD motif motif. The short motif at 229–237 (NDIYSFNNE) is the NSE/DTE motif element. (2E,6E)-farnesyl diphosphate contacts are provided by R316 and Y317.

This sequence belongs to the terpene synthase family. The cofactor is Mg(2+).

The catalysed reaction is (2E,6E)-farnesyl diphosphate = delta-cadinene + diphosphate. The enzyme catalyses (2E,6E)-farnesyl diphosphate = bicyclogermacrene + diphosphate. Terpene cyclase that catalyzes the cyclization of farnesyl diphosphate (FPP) to various sesquiterpenes, including bicycloelemene, alpha-gurjunene, 9-epi-caryophylene, bicyclosesquiphellandrene, bicyclogermacrene and delta-cadinene. The sequence is that of Sesquiterpene synthase 6 from Postia placenta (strain ATCC 44394 / Madison 698-R) (Brown rot fungus).